Reading from the N-terminus, the 150-residue chain is Large ribosomal subunit protein uL11 (150 aa).

It belongs to the universal ribosomal protein uL11 family. As to quaternary structure, part of the ribosomal stalk of the 50S ribosomal subunit. Interacts with L10 and the large rRNA to form the base of the stalk. L10 forms an elongated spine to which L12 dimers bind in a sequential fashion forming a multimeric L10(L12)X complex. Post-translationally, one or more lysine residues are methylated.

Its function is as follows. Forms part of the ribosomal stalk which helps the ribosome interact with GTP-bound translation factors. The sequence is that of Large ribosomal subunit protein uL11 from Ureaplasma parvum serovar 3 (strain ATCC 27815 / 27 / NCTC 11736).